A 691-amino-acid chain; its full sequence is Elongation factor G (691 aa).

One can recognise a tr-type G domain in the interval 8-283 (KKVRNIGIAA…AVVAYLPAPD (276 aa)). Residues 17 to 24 (AHIDAGKT), 81 to 85 (DTPGH), and 135 to 138 (NKMD) contribute to the GTP site.

The protein belongs to the TRAFAC class translation factor GTPase superfamily. Classic translation factor GTPase family. EF-G/EF-2 subfamily.

The protein localises to the cytoplasm. In terms of biological role, catalyzes the GTP-dependent ribosomal translocation step during translation elongation. During this step, the ribosome changes from the pre-translocational (PRE) to the post-translocational (POST) state as the newly formed A-site-bound peptidyl-tRNA and P-site-bound deacylated tRNA move to the P and E sites, respectively. Catalyzes the coordinated movement of the two tRNA molecules, the mRNA and conformational changes in the ribosome. This chain is Elongation factor G, found in Campylobacter jejuni subsp. jejuni serotype O:6 (strain 81116 / NCTC 11828).